Reading from the N-terminus, the 232-residue chain is Pyridoxal 5'-phosphate synthase subunit PdxS (232 aa).

K23 (schiff-base intermediate with D-ribose 5-phosphate) is an active-site residue. G95 lines the D-ribose 5-phosphate pocket. R107 is a binding site for D-glyceraldehyde 3-phosphate. D-ribose 5-phosphate is bound by residues G156 and 177-178 (GS).

The protein belongs to the PdxS/SNZ family. As to quaternary structure, in the presence of PdxT, forms a dodecamer of heterodimers.

It catalyses the reaction aldehydo-D-ribose 5-phosphate + D-glyceraldehyde 3-phosphate + L-glutamine = pyridoxal 5'-phosphate + L-glutamate + phosphate + 3 H2O + H(+). It functions in the pathway cofactor biosynthesis; pyridoxal 5'-phosphate biosynthesis. In terms of biological role, catalyzes the formation of pyridoxal 5'-phosphate from ribose 5-phosphate (RBP), glyceraldehyde 3-phosphate (G3P) and ammonia. The ammonia is provided by the PdxT subunit. Can also use ribulose 5-phosphate and dihydroxyacetone phosphate as substrates, resulting from enzyme-catalyzed isomerization of RBP and G3P, respectively. This chain is Pyridoxal 5'-phosphate synthase subunit PdxS, found in Clostridium novyi.